Consider the following 149-residue polypeptide: General odorant-binding protein 99b (149 aa).

A signal peptide spans 1 to 16 (MKVLIVLLLGLAFVLA). 3 disulfide bridges follow: C40–C71, C67–C125, and C114–C134.

It belongs to the PBP/GOBP family. In terms of tissue distribution, expressed in adult olfactory system. Expressed in subsets of sensilla in both olfactory organs, the maxillary palps, and third antennal segments.

Its subcellular location is the secreted. Functionally, present in the aqueous fluid surrounding olfactory sensory dendrites and are thought to aid in the capture and transport of hydrophobic odorants into and through this fluid. In Drosophila melanogaster (Fruit fly), this protein is General odorant-binding protein 99b (Obp99b).